The chain runs to 362 residues: Beta-ketoacyl-[acyl-carrier-protein] synthase III 2 (362 aa).

Residues cysteine 113 and histidine 251 contribute to the active site. The ACP-binding stretch occupies residues 252-256 (QANIR). Asparagine 281 is an active-site residue.

The protein belongs to the thiolase-like superfamily. FabH family. Homodimer.

Its subcellular location is the cytoplasm. It carries out the reaction malonyl-[ACP] + acetyl-CoA + H(+) = 3-oxobutanoyl-[ACP] + CO2 + CoA. Its pathway is lipid metabolism; fatty acid biosynthesis. Its function is as follows. Catalyzes the condensation reaction of fatty acid synthesis by the addition to an acyl acceptor of two carbons from malonyl-ACP. Catalyzes the first condensation reaction which initiates fatty acid synthesis and may therefore play a role in governing the total rate of fatty acid production. Possesses both acetoacetyl-ACP synthase and acetyl transacylase activities. Its substrate specificity determines the biosynthesis of branched-chain and/or straight-chain of fatty acids. The polypeptide is Beta-ketoacyl-[acyl-carrier-protein] synthase III 2 (Vibrio vulnificus (strain YJ016)).